The chain runs to 1029 residues: Cilia- and flagella-associated protein 91 (1029 aa).

Disordered stretches follow at residues 72–97 (NYRP…GPNR) and 117–170 (PPSQ…PWEP). Positions 272 to 299 (LELLDNALQVREEELDDENRLRVEARKE) form a coiled coil. A compositionally biased stretch (low complexity) spans 837–854 (ENQDQQEPQPQPQPSSSS). Disordered stretches follow at residues 837 to 861 (ENQD…DLAD) and 876 to 1029 (GEPS…EAAE). The segment covering 890–910 (QQLEADAEAEAEAEAEAEAGA) has biased composition (acidic residues). Over residues 911–921 (EAEASAQAGAE) the composition is skewed to low complexity. The segment covering 922-932 (AEAEAGVEAEA) has biased composition (acidic residues). The span at 933–944 (EASAGAEASVGA) shows a compositional bias: low complexity. The segment covering 964 to 982 (PEAEAEAEAGAEAEAENGA) has biased composition (acidic residues). Positions 984 to 999 (AEARLGGEEEGFREGE) are enriched in basic and acidic residues. The segment covering 1000–1015 (GQGGAAAGEAGPGGEL) has biased composition (gly residues). Positions 1016-1029 (AEGEGEAGEGEAAE) are enriched in acidic residues.

It belongs to the CFAP91 family. In terms of assembly, identified in a spoke-associated complex containing CFAP61, CFAP91 and CFAP251; the complex is associated with the radial spokes of the axoneme. The complex associates with Calmodulin; the association is calcium sensitive. Interacts with RSP3.

The protein localises to the cytoplasm. The protein resides in the cytoskeleton. It localises to the flagellum axoneme. As component of a spoke-associated complex, regulates flagellar dynein activity by mediating regulatory signals between the radial spokes and dynein arms. This chain is Cilia- and flagella-associated protein 91, found in Chlamydomonas reinhardtii (Chlamydomonas smithii).